The primary structure comprises 454 residues: Chromosomal replication initiator protein DnaA (454 aa).

The interval 1–79 is domain I, interacts with DnaA modulators; that stretch reads MSLCLWKQCL…NSPFIKFKVY (79 aa). The domain II stretch occupies residues 79–117; the sequence is YQTSKEKKFKKNILQKIQNLNAKPIWDKIPIFKKSSHRS. The domain III, AAA+ region stretch occupies residues 118–334; it reads NINKKHSFEN…GALNRVIVNA (217 aa). Positions 162, 164, 165, and 166 each coordinate ATP. A domain IV, binds dsDNA region spans residues 335–454; that stretch reads NFTHRSITVE…FSNLIRTLSV (120 aa).

This sequence belongs to the DnaA family. In terms of assembly, oligomerizes as a right-handed, spiral filament on DNA at oriC.

Its subcellular location is the cytoplasm. Its function is as follows. Plays an essential role in the initiation and regulation of chromosomal replication. ATP-DnaA binds to the origin of replication (oriC) to initiate formation of the DNA replication initiation complex once per cell cycle. Binds the DnaA box (a 9 base pair repeat at the origin) and separates the double-stranded (ds)DNA. Forms a right-handed helical filament on oriC DNA; dsDNA binds to the exterior of the filament while single-stranded (ss)DNA is stabiized in the filament's interior. The ATP-DnaA-oriC complex binds and stabilizes one strand of the AT-rich DNA unwinding element (DUE), permitting loading of DNA polymerase. After initiation quickly degrades to an ADP-DnaA complex that is not apt for DNA replication. Binds acidic phospholipids. The chain is Chromosomal replication initiator protein DnaA from Buchnera aphidicola subsp. Schizaphis graminum (strain Sg).